A 202-amino-acid chain; its full sequence is Probable septum site-determining protein MinC (202 aa).

The protein belongs to the MinC family. As to quaternary structure, interacts with MinD and FtsZ.

In terms of biological role, cell division inhibitor that blocks the formation of polar Z ring septums. Rapidly oscillates between the poles of the cell to destabilize FtsZ filaments that have formed before they mature into polar Z rings. Prevents FtsZ polymerization. The sequence is that of Probable septum site-determining protein MinC from Dictyoglomus turgidum (strain DSM 6724 / Z-1310).